A 511-amino-acid chain; its full sequence is Probable eukaryotic translation initiation factor 4H (511 aa).

Disordered stretches follow at residues 25-63 and 154-511; these read SWAD…DRGS and TIRV…EVKI. Basic and acidic residues predominate over residues 39–51; the sequence is AREESGSGLKRGD. An RRM domain is found at 86 to 162; sequence FTAFIGNLSF…RTIRVNVAEA (77 aa). The segment covering 179-196 has biased composition (polar residues); sequence WRRSTPLASRESSSQPSR. 2 stretches are compositionally biased toward basic and acidic residues: residues 230–247 and 261–270; these read VRRD…RDPG and LAEKVDRDVP. Positions 285-318 are enriched in polar residues; the sequence is LADTEQTWSRGTKLRTPTTTSRQSSADSTPSSGA. Over residues 331 to 349 the composition is skewed to low complexity; that stretch reads TAGSPSATANATPAAPASG. The residue at position 334 (Ser334) is a Phosphoserine. 2 stretches are compositionally biased toward basic and acidic residues: residues 360–388 and 394–419; these read AARE…EKQK and KPVE…DKVA. Residues 420 to 434 are compositionally biased toward low complexity; sequence GKPTTAPATTTNTGA. Residues 438-448 are compositionally biased toward basic and acidic residues; that stretch reads GSADRAKKDEQ. A compositionally biased stretch (polar residues) spans 451–467; it reads EQVQPSRKSSQTGATSE. Over residues 502 to 511 the composition is skewed to basic and acidic residues; it reads VTKGVEEVKI.

It localises to the cytoplasm. It is found in the P-body. Functionally, probable translation initiation factor. This is Probable eukaryotic translation initiation factor 4H from Cryptococcus neoformans var. grubii serotype A (strain H99 / ATCC 208821 / CBS 10515 / FGSC 9487) (Filobasidiella neoformans var. grubii).